The chain runs to 831 residues: G-type lectin S-receptor-like serine/threonine-protein kinase At1g61390 (831 aa).

An N-terminal signal peptide occupies residues 1–42 (MYKLPQRNCADKQEYTVHMRKMGMVIFACLLLLIIFPTFGYA). The region spanning 43-162 (DINTSSPLSI…VSGKTLWKSF (120 aa)) is the Bulb-type lectin domain. Residues 43-448 (DINTSSPLSI…SSELAGSNRT (406 aa)) are Extracellular-facing. Asn-45, Asn-71, Asn-106, and Asn-112 each carry an N-linked (GlcNAc...) asparagine glycan. An EGF-like; atypical domain is found at 298–334 (PTSSCDLYRACGPFGLCVRSRNPKCICLKGFVPKSDD). Intrachain disulfides connect Cys-302–Cys-314 and Cys-308–Cys-322. Residues Asn-340, Asn-356, Asn-399, and Asn-446 are each glycosylated (N-linked (GlcNAc...) asparagine). In terms of domain architecture, PAN spans 353–439 (CHTNSSTKTQ…GESLSLRLAS (87 aa)). 2 disulfides stabilise this stretch: Cys-392–Cys-413 and Cys-396–Cys-402. A helical membrane pass occupies residues 449 to 469 (KIILGTTVSLSIFVILVFAAY). Residues 470–831 (KSWRYRTKQN…EITQSVIQGR (362 aa)) are Cytoplasmic-facing. The 284-residue stretch at 520–803 (FSSSNKLGQG…ELPSPKQPTF (284 aa)) folds into the Protein kinase domain. ATP is bound by residues 526-534 (LGQGGFGPV) and Lys-548. Ser-554 and Ser-569 each carry phosphoserine. The interval 609–626 (TLKFEIDWQKRFNIIQGV) is caM-binding. Asp-645 (proton acceptor) is an active-site residue. Phosphoserine is present on residues Ser-649 and Ser-662. Phosphothreonine is present on Thr-679. Residues Ser-722 and Ser-814 each carry the phosphoserine modification.

The protein belongs to the protein kinase superfamily. Ser/Thr protein kinase family.

It localises to the cell membrane. The catalysed reaction is L-seryl-[protein] + ATP = O-phospho-L-seryl-[protein] + ADP + H(+). It carries out the reaction L-threonyl-[protein] + ATP = O-phospho-L-threonyl-[protein] + ADP + H(+). The chain is G-type lectin S-receptor-like serine/threonine-protein kinase At1g61390 from Arabidopsis thaliana (Mouse-ear cress).